Consider the following 868-residue polypeptide: Muscle, skeletal receptor tyrosine-protein kinase (868 aa).

The signal sequence occupies residues 1–21; sequence MRELVNIPLLQMLTLVAFSGT. The Extracellular segment spans residues 22–494; it reads EKLPKAPVIT…FAVSPAYSMT (473 aa). Ig-like domains are found at residues 28–116, 121–205, and 212–302; these read PVIT…GALQ, PKIT…KLVK, and ARIL…ATVS. 3 disulfides stabilise this stretch: C49–C99, C98–C112, and C142–C190. N222 is a glycosylation site (N-linked (GlcNAc...) asparagine). Disulfide bonds link C233–C282, C317–C382, C325–C375, C366–C406, C394–C447, and C398–C434. The FZ domain maps to 312–450; sequence DSQGYCAQYR…HRDPTACTRL (139 aa). A glycan (N-linked (GlcNAc...) asparagine) is linked at N338. N-linked (GlcNAc...) asparagine glycosylation is present at N459. A helical transmembrane segment spans residues 495–515; sequence VIISIVSSFALFALLTIATLY. Topologically, residues 516–868 are cytoplasmic; it reads CCRRRKEWKN…CERAEGTVGV (353 aa). Residue Y553 is modified to Phosphotyrosine; by autocatalysis. A Protein kinase domain is found at 574 to 855; that stretch reads IEYVRDIGEG…PSFCSIHRIL (282 aa). Residues 580-588 and K608 each bind ATP; that span reads IGEGAFGRV. A phosphoserine; by CK2 mark is found at S680 and S697. D724 functions as the Proton acceptor in the catalytic mechanism. At Y754 the chain carries Phosphotyrosine; by autocatalysis.

The protein belongs to the protein kinase superfamily. Tyr protein kinase family. Monomer. Homodimer. Interacts with LRP4; the heterodimer forms an AGRIN receptor complex that binds AGRIN resulting in activation of MUSK. Forms a heterotetramer composed of 2 DOK7 and 2 MUSK molecules which facilitates MUSK trans-autophosphorylation on tyrosine residue and activation. Interacts (via cytoplasmic part) with DOK7 (via IRS-type PTB domain); requires MUSK phosphorylation. Interacts with DVL1 (via DEP domain); the interaction is direct and mediates the formation of a DVL1, MUSK and PAK1 ternary complex involved in AChR clustering. Interacts with PDZRN3; this interaction is enhanced by agrin. Interacts with FNTA; the interaction is direct and mediates AGRIN-induced phosphorylation and activation of FNTA. Interacts with CSNK2B; mediates regulation by CK2. Interacts (via the cytoplasmic domain) with DNAJA3. Interacts with NSF; may regulate MUSK endocytosis and activity. Interacts with CAV3; may regulate MUSK signaling. Interacts with RNF31. Requires Mg(2+) as cofactor. In terms of processing, ubiquitinated by PDZRN3. Ubiquitination promotes endocytosis and lysosomal degradation. Post-translationally, phosphorylated. Phosphorylation is induced by AGRIN. Autophosphorylated. Autophosphorylation at Tyr-553 is required for interaction with DOK7 which in turn stimulates the phosphorylation and the activation of MUSK. Neddylated. As to expression, expressed preferentially in skeletal muscle.

The protein localises to the postsynaptic cell membrane. The catalysed reaction is L-tyrosyl-[protein] + ATP = O-phospho-L-tyrosyl-[protein] + ADP + H(+). Positively regulated by CK2. Receptor tyrosine kinase which plays a central role in the formation and the maintenance of the neuromuscular junction (NMJ), the synapse between the motor neuron and the skeletal muscle. Recruitment of AGRIN by LRP4 to the MUSK signaling complex induces phosphorylation and activation of MUSK, the kinase of the complex. The activation of MUSK in myotubes regulates the formation of NMJs through the regulation of different processes including the specific expression of genes in subsynaptic nuclei, the reorganization of the actin cytoskeleton and the clustering of the acetylcholine receptors (AChR) in the postsynaptic membrane. May regulate AChR phosphorylation and clustering through activation of ABL1 and Src family kinases which in turn regulate MUSK. DVL1 and PAK1 that form a ternary complex with MUSK are also important for MUSK-dependent regulation of AChR clustering. May positively regulate Rho family GTPases through FNTA. Mediates the phosphorylation of FNTA which promotes prenylation, recruitment to membranes and activation of RAC1 a regulator of the actin cytoskeleton and of gene expression. Other effectors of the MUSK signaling include DNAJA3 which functions downstream of MUSK. May also play a role within the central nervous system by mediating cholinergic responses, synaptic plasticity and memory formation. This Mus musculus (Mouse) protein is Muscle, skeletal receptor tyrosine-protein kinase (Musk).